A 345-amino-acid polypeptide reads, in one-letter code: N-acetyl-gamma-glutamyl-phosphate reductase (345 aa).

Residue Cys-149 is part of the active site.

Belongs to the NAGSA dehydrogenase family. Type 1 subfamily.

Its subcellular location is the cytoplasm. The catalysed reaction is N-acetyl-L-glutamate 5-semialdehyde + phosphate + NADP(+) = N-acetyl-L-glutamyl 5-phosphate + NADPH + H(+). Its pathway is amino-acid biosynthesis; L-arginine biosynthesis; N(2)-acetyl-L-ornithine from L-glutamate: step 3/4. In terms of biological role, catalyzes the NADPH-dependent reduction of N-acetyl-5-glutamyl phosphate to yield N-acetyl-L-glutamate 5-semialdehyde. The polypeptide is N-acetyl-gamma-glutamyl-phosphate reductase (Bacillus anthracis).